Consider the following 91-residue polypeptide: Ixochymostatin (91 aa).

The N-terminal stretch at 1 to 20 (MKTYVLQALLLTLAVAVVRA) is a signal peptide. Disulfide bonds link Cys34–Cys70, Cys43–Cys66, Cys48–Cys62, Cys53–Cys90, and Cys72–Cys84. The TIL domain occupies 34 to 90 (CAEGETWKECVGSSCAELTCEHPEPSLGCTYDCNYGCYCAPDFFRNANKECVKKDKC).

The protein belongs to the serine protease inhibitor-like (TIL domain-containing) family. As to expression, salivary gland. Midgut.

The protein resides in the secreted. Functionally, tight-binding competitive inhibitor of chymotrypsin-like proteases; inhibits host chymase, cathepsin G (CTSG) and chymotrypsin. Inhibits chymase-mediated generation of vasoconstrictor peptides: angiotensin II and endothelin I. Reduces chymase-mediated vascular permeability and vascular endothelial-cadherin degradation. The chain is Ixochymostatin from Ixodes scapularis (Black-legged tick).